The following is a 240-amino-acid chain: T-cell antigen CD7 (240 aa).

An N-terminal signal peptide occupies residues Met-1–Ala-25. The region spanning Ala-26–Leu-130 is the Ig-like domain. Residues Ala-26–Pro-180 lie on the Extracellular side of the membrane. Cystine bridges form between Cys-35–Cys-142 and Cys-48–Cys-114. N-linked (GlcNAc...) asparagine glycans are attached at residues Asn-45 and Asn-96. The tract at residues His-140 to Asp-172 is disordered. Repeat copies occupy residues Ala-145 to Pro-153, Ala-154 to Pro-162, Asp-163 to Pro-171, and Asp-172 to Pro-180. Residues Ala-145 to Pro-180 are 4 X 9 AA tandem repeats, potential spacer function. Residues Ala-181–Ala-201 traverse the membrane as a helical segment. Cys-198 is lipidated: S-palmitoyl cysteine. At Arg-202 to Gln-240 the chain is on the cytoplasmic side.

Interacts with SECTM1. As to expression, expressed on T-cells and natural killer (NK) cells and their precursors.

Its subcellular location is the membrane. Its function is as follows. Transmembrane glycoprotein expressed by T-cells and natural killer (NK) cells and their precursors. Plays a costimulatory role in T-cell activation upon binding to its ligand K12/SECTM1. In turn, mediates the production of cytokines such as IL-2. On resting NK-cells, CD7 activation results in a significant induction of interferon-gamma levels. The polypeptide is T-cell antigen CD7 (CD7) (Homo sapiens (Human)).